The chain runs to 57 residues: MAVPKKKTSKAKRDQRRAHWRRQASSQAQKALSLGKSILSGRSTFLYPPAEEEGEEE.

Residues 1–22 show a composition bias toward basic residues; that stretch reads MAVPKKKTSKAKRDQRRAHWRR. The interval 1 to 35 is disordered; the sequence is MAVPKKKTSKAKRDQRRAHWRRQASSQAQKALSLG.

This sequence belongs to the bacterial ribosomal protein bL32 family.

This is Large ribosomal subunit protein bL32 (rpmF) from Synechocystis sp. (strain ATCC 27184 / PCC 6803 / Kazusa).